A 135-amino-acid polypeptide reads, in one-letter code: uncharacterized protein (135 aa).

The disordered stretch occupies residues 56–135 (VQSHNRGINN…QKGQLKIEKV (80 aa)). Positions 64 to 74 (NNRRRDQKRKQ) are enriched in basic residues. Over residues 77 to 89 (SIKQDNDLNVSSE) the composition is skewed to polar residues. A compositionally biased stretch (basic and acidic residues) spans 108–135 (YKETPDLDEPGSREKRVSQKGQLKIEKV).

This is an uncharacterized protein from Schizosaccharomyces pombe (strain 972 / ATCC 24843) (Fission yeast).